A 314-amino-acid polypeptide reads, in one-letter code: DNA-directed RNA polymerase subunit alpha (314 aa).

The interval Met-1–Thr-228 is alpha N-terminal domain (alpha-NTD). The alpha C-terminal domain (alpha-CTD) stretch occupies residues Lys-245–Asp-314.

This sequence belongs to the RNA polymerase alpha chain family. In terms of assembly, homodimer. The RNAP catalytic core consists of 2 alpha, 1 beta, 1 beta' and 1 omega subunit. When a sigma factor is associated with the core the holoenzyme is formed, which can initiate transcription.

The catalysed reaction is RNA(n) + a ribonucleoside 5'-triphosphate = RNA(n+1) + diphosphate. DNA-dependent RNA polymerase catalyzes the transcription of DNA into RNA using the four ribonucleoside triphosphates as substrates. In Bacillus thuringiensis (strain Al Hakam), this protein is DNA-directed RNA polymerase subunit alpha.